A 568-amino-acid polypeptide reads, in one-letter code: DEAD-box ATP-dependent RNA helicase 51 (568 aa).

Composition is skewed to basic and acidic residues over residues Met1–Lys13 and Lys23–Lys47. Positions Met1 to Glu70 are disordered. The stretch at Lys13–Ile78 forms a coiled coil. Over residues Glu60 to Glu70 the composition is skewed to acidic residues. Positions Val89 to Ala117 match the Q motif motif. One can recognise a Helicase ATP-binding domain in the interval Ile120–Val295. ATP is bound at residue Ala133–Thr140. Residues Asp243–Asp246 carry the DEAD box motif. One can recognise a Helicase C-terminal domain in the interval Arg321–Ser468. A disordered region spans residues Lys540–Ala568.

Belongs to the DEAD box helicase family. DDX18/HAS1 subfamily.

It catalyses the reaction ATP + H2O = ADP + phosphate + H(+). This Arabidopsis thaliana (Mouse-ear cress) protein is DEAD-box ATP-dependent RNA helicase 51 (RH51).